A 58-amino-acid chain; its full sequence is Small ribosomal subunit protein bS21 (58 aa).

Residues 24 to 58 (TKAGTLQEARKREHYEKPSVKRKRKSEAARKRKKI) are disordered. The segment covering 31-42 (EARKREHYEKPS) has biased composition (basic and acidic residues). Basic residues predominate over residues 43–58 (VKRKRKSEAARKRKKI).

This sequence belongs to the bacterial ribosomal protein bS21 family.

The polypeptide is Small ribosomal subunit protein bS21 (Streptococcus thermophilus (strain CNRZ 1066)).